The primary structure comprises 120 residues: Non-specific lipid-transfer protein (120 aa).

The signal sequence occupies residues 1 to 26 (MASSMSLKLACVVVLCMVVGAPLAQG). 3 disulfides stabilise this stretch: C40/C56, C57/C102, and C77/C116.

It belongs to the plant LTP family.

Functionally, plant non-specific lipid-transfer proteins transfer phospholipids as well as galactolipids across membranes. May play a role in wax or cutin deposition in the cell walls of expanding epidermal cells and certain secretory tissues. This chain is Non-specific lipid-transfer protein, found in Gossypium hirsutum (Upland cotton).